The chain runs to 621 residues: Complex I assembly factor ACAD9, mitochondrial (621 aa).

A mitochondrion-targeting transit peptide spans 1–37 (MSGCGLFLRTTAAARACRGLVVSTANRRLLRTSPPVR). Lys41 carries the N6-acetyllysine modification. Lys92 bears the N6-succinyllysine mark. Residue Glu426 is the Proton acceptor of the active site. Phosphothreonine is present on Thr478. At Lys521 the chain carries N6-acetyllysine; alternate. Lys521 is subject to N6-succinyllysine; alternate.

Belongs to the acyl-CoA dehydrogenase family. In terms of assembly, homodimer. Interacts with NDUFAF1 and ECSIT. Part of the mitochondrial complex I assembly/MCIA complex that comprises at least the core subunits TMEM126B, NDUFAF1, ECSIT and ACAD9 and complement subunits such as COA1 and TMEM186. Interacts with TMEM70 and TMEM242. The cofactor is FAD. As to expression, ubiquitously expressed in most normal human tissues and cancer cell lines with high level of expression in heart, skeletal muscles, brain, kidney and liver. In the cerebellum uniquely expressed in the granular layer (at protein level).

The protein resides in the mitochondrion inner membrane. It carries out the reaction eicosanoyl-CoA + oxidized [electron-transfer flavoprotein] + H(+) = (2E)-eicosenoyl-CoA + reduced [electron-transfer flavoprotein]. The catalysed reaction is octadecanoyl-CoA + oxidized [electron-transfer flavoprotein] + H(+) = (2E)-octadecenoyl-CoA + reduced [electron-transfer flavoprotein]. The enzyme catalyses oxidized [electron-transfer flavoprotein] + hexadecanoyl-CoA + H(+) = (2E)-hexadecenoyl-CoA + reduced [electron-transfer flavoprotein]. It catalyses the reaction decanoyl-CoA + oxidized [electron-transfer flavoprotein] + H(+) = (2E)-decenoyl-CoA + reduced [electron-transfer flavoprotein]. It carries out the reaction nonanoyl-CoA + oxidized [electron-transfer flavoprotein] + H(+) = (2E)-nonenoyl-CoA + reduced [electron-transfer flavoprotein]. The catalysed reaction is pentadecanoyl-CoA + oxidized [electron-transfer flavoprotein] + H(+) = (2E)-pentadecenoyl-CoA + reduced [electron-transfer flavoprotein]. The enzyme catalyses undecanoyl-CoA + oxidized [electron-transfer flavoprotein] + H(+) = trans-2-undecenoyl-CoA + reduced [electron-transfer flavoprotein]. It catalyses the reaction (9Z)-hexadecenoyl-CoA + oxidized [electron-transfer flavoprotein] + H(+) = (2E,9Z)-hexadecadienoyl-CoA + reduced [electron-transfer flavoprotein]. It carries out the reaction heptadecanoyl-CoA + oxidized [electron-transfer flavoprotein] + H(+) = trans-2-heptadecenoyl-CoA + reduced [electron-transfer flavoprotein]. The catalysed reaction is (9E)-octadecenoyl-CoA + oxidized [electron-transfer flavoprotein] + H(+) = (2E,9E)-octadecadienoyl-CoA + reduced [electron-transfer flavoprotein]. The enzyme catalyses oxidized [electron-transfer flavoprotein] + (9Z)-octadecenoyl-CoA + H(+) = (2E,9Z)-octadecadienoyl-CoA + reduced [electron-transfer flavoprotein]. It catalyses the reaction (9Z,12Z)-octadecadienoyl-CoA + oxidized [electron-transfer flavoprotein] + H(+) = (2E,9Z,12Z)-octadecatrienoyl-CoA + reduced [electron-transfer flavoprotein]. It carries out the reaction (4Z,7Z,10Z,13Z,16Z,19Z)-docosahexaenoyl-CoA + oxidized [electron-transfer flavoprotein] + H(+) = (2E,4Z,7Z,10Z,13Z,16Z,19Z)-docosaheptaenoyl-CoA + reduced [electron-transfer flavoprotein]. The catalysed reaction is tetradecanoyl-CoA + oxidized [electron-transfer flavoprotein] + H(+) = (2E)-tetradecenoyl-CoA + reduced [electron-transfer flavoprotein]. Functionally, as part of the MCIA complex, primarily participates in the assembly of the mitochondrial complex I and therefore plays a role in oxidative phosphorylation. This moonlighting protein also has a dehydrogenase activity toward a broad range of substrates with greater specificity for long-chain unsaturated acyl-CoAs. However, in vivo, it does not seem to play a primary role in fatty acid oxidation. In addition, the function in complex I assembly is independent of the dehydrogenase activity of the protein. The polypeptide is Complex I assembly factor ACAD9, mitochondrial (Homo sapiens (Human)).